Consider the following 596-residue polypeptide: Chitooligosaccharidolytic beta-N-acetylglucosaminidase (596 aa).

Positions M1–A23 are cleaved as a signal peptide. Residues N166, N264, and N377 are each glycosylated (N-linked (GlcNAc...) asparagine).

The protein belongs to the glycosyl hydrolase 20 family.

The enzyme catalyses Hydrolysis of terminal non-reducing N-acetyl-D-hexosamine residues in N-acetyl-beta-D-hexosaminides.. In terms of biological role, active during metamorphosis to degrade chitin. This chain is Chitooligosaccharidolytic beta-N-acetylglucosaminidase, found in Bombyx mori (Silk moth).